The following is a 55-amino-acid chain: Large ribosomal subunit protein bL33 (55 aa).

Belongs to the bacterial ribosomal protein bL33 family.

In Aromatoleum aromaticum (strain DSM 19018 / LMG 30748 / EbN1) (Azoarcus sp. (strain EbN1)), this protein is Large ribosomal subunit protein bL33.